The primary structure comprises 535 residues: MTKYIFVTGGVVSSLGKGIVAASLGRLLKNRGLNVTIQKFDPYINVDPGTMNPYQHGEVFVTDDGTETDLDLGHYERFIDNNLNKYSNVTTGKIYSEVLEKERHGDYLGATVQVIPHITGMIKEKIMRAGKTLGADFVITEIGGTVGDIESQPFLEAIRQMKAEVGDENVVYIHTTLVPYLHAAHEMKTKPTQHSVRELRSIGIQPNILVVRTEAPITDDMRKKIALFCDVDPSAVVESMDVPTIYSIPLRLQDQGLDQIVLDHFGVQAPKADMTAWAQMVDHMQHLSRTIKIALVGKYVALHDAYISVAEALQHAGYPVDANIDLQMIDAEKITDDNVQDVLGSADGIIVPGGFGDRGIEGMITAIKYAREQDVPFLGICLGMQVASIEFARDVLGYADANSTEMNPDTSHKIIDLMADQADVHEMGGTQRLGLYPCKLKAGSRAAAAYDNQEMIQERHRHRYEFNNQYRDEMTAKGLVFSGTSPDDHLVEVIELPEKKFFVAAQYHPEFLSRPNRPEGLFRDFVAAASREVKD.

An amidoligase domain region spans residues 1 to 267 (MTKYIFVTGG…DQIVLDHFGV (267 aa)). S13 provides a ligand contact to CTP. Residue S13 participates in UTP binding. Position 14–19 (14–19 (SLGKGI)) interacts with ATP. Y54 provides a ligand contact to L-glutamine. Position 71 (D71) interacts with ATP. Positions 71 and 141 each coordinate Mg(2+). Residues 148–150 (DIE), 188–193 (KTKPTQ), and K224 contribute to the CTP site. Residues 188-193 (KTKPTQ) and K224 contribute to the UTP site. The Glutamine amidotransferase type-1 domain maps to 292–535 (KIALVGKYVA…VAAASREVKD (244 aa)). G354 contacts L-glutamine. Residue C381 is the Nucleophile; for glutamine hydrolysis of the active site. Residues 382–385 (LGMQ), E405, and R463 each bind L-glutamine. Catalysis depends on residues H508 and E510.

The protein belongs to the CTP synthase family. In terms of assembly, homotetramer.

The catalysed reaction is UTP + L-glutamine + ATP + H2O = CTP + L-glutamate + ADP + phosphate + 2 H(+). It catalyses the reaction L-glutamine + H2O = L-glutamate + NH4(+). It carries out the reaction UTP + NH4(+) + ATP = CTP + ADP + phosphate + 2 H(+). The protein operates within pyrimidine metabolism; CTP biosynthesis via de novo pathway; CTP from UDP: step 2/2. Allosterically activated by GTP, when glutamine is the substrate; GTP has no effect on the reaction when ammonia is the substrate. The allosteric effector GTP functions by stabilizing the protein conformation that binds the tetrahedral intermediate(s) formed during glutamine hydrolysis. Inhibited by the product CTP, via allosteric rather than competitive inhibition. In terms of biological role, catalyzes the ATP-dependent amination of UTP to CTP with either L-glutamine or ammonia as the source of nitrogen. Regulates intracellular CTP levels through interactions with the four ribonucleotide triphosphates. This Levilactobacillus brevis (strain ATCC 367 / BCRC 12310 / CIP 105137 / JCM 1170 / LMG 11437 / NCIMB 947 / NCTC 947) (Lactobacillus brevis) protein is CTP synthase.